The sequence spans 226 residues: Flagellar L-ring protein (226 aa).

The signal sequence occupies residues 1–15; that stretch reads MRILGLSAALLILGG. Cys16 carries N-palmitoyl cysteine lipidation. Cys16 carries the S-diacylglycerol cysteine lipid modification.

This sequence belongs to the FlgH family. As to quaternary structure, the basal body constitutes a major portion of the flagellar organelle and consists of four rings (L,P,S, and M) mounted on a central rod.

Its subcellular location is the cell outer membrane. It localises to the bacterial flagellum basal body. Its function is as follows. Assembles around the rod to form the L-ring and probably protects the motor/basal body from shearing forces during rotation. The sequence is that of Flagellar L-ring protein from Alteromonas mediterranea (strain DSM 17117 / CIP 110805 / LMG 28347 / Deep ecotype).